The sequence spans 255 residues: Pyrroloquinoline-quinone synthase (255 aa).

The protein belongs to the PqqC family.

The enzyme catalyses 6-(2-amino-2-carboxyethyl)-7,8-dioxo-1,2,3,4,7,8-hexahydroquinoline-2,4-dicarboxylate + 3 O2 = pyrroloquinoline quinone + 2 H2O2 + 2 H2O + H(+). The protein operates within cofactor biosynthesis; pyrroloquinoline quinone biosynthesis. Ring cyclization and eight-electron oxidation of 3a-(2-amino-2-carboxyethyl)-4,5-dioxo-4,5,6,7,8,9-hexahydroquinoline-7,9-dicarboxylic-acid to PQQ. This chain is Pyrroloquinoline-quinone synthase, found in Cereibacter sphaeroides (strain KD131 / KCTC 12085) (Rhodobacter sphaeroides).